Here is a 91-residue protein sequence, read N- to C-terminus: Putative septation protein SpoVG (91 aa).

Belongs to the SpoVG family.

Its function is as follows. Could be involved in septation. The sequence is that of Putative septation protein SpoVG from Caldanaerobacter subterraneus subsp. tengcongensis (strain DSM 15242 / JCM 11007 / NBRC 100824 / MB4) (Thermoanaerobacter tengcongensis).